The chain runs to 419 residues: GTPase Obg (419 aa).

Residues 1–158 (MFVDQARIFV…KWIRLELKLL (158 aa)) form the Obg domain. The OBG-type G domain maps to 159–327 (ADVGLVGFPN…LMGKTYALLQ (169 aa)). GTP contacts are provided by residues 165 to 172 (GFPNAGKS), 190 to 194 (FTTLV), 212 to 215 (DIPG), 282 to 285 (NKMD), and 308 to 310 (SAV). Residues S172 and T192 each contribute to the Mg(2+) site. In terms of domain architecture, OCT spans 342-419 (RRFEEELPFK…IKDFEFEFTE (78 aa)).

This sequence belongs to the TRAFAC class OBG-HflX-like GTPase superfamily. OBG GTPase family. As to quaternary structure, monomer. It depends on Mg(2+) as a cofactor.

It localises to the cytoplasm. Its function is as follows. An essential GTPase which binds GTP, GDP and possibly (p)ppGpp with moderate affinity, with high nucleotide exchange rates and a fairly low GTP hydrolysis rate. Plays a role in control of the cell cycle, stress response, ribosome biogenesis and in those bacteria that undergo differentiation, in morphogenesis control. The polypeptide is GTPase Obg (Syntrophomonas wolfei subsp. wolfei (strain DSM 2245B / Goettingen)).